Here is a 75-residue protein sequence, read N- to C-terminus: Cytochrome c oxidase subunit 6C (75 aa).

Residues 1–13 are Mitochondrial matrix-facing; it reads MSSGALTKPQMRG. The helical transmembrane segment at 14 to 54 threads the bilayer; that stretch reads LLAKRLRFHIVGAFAVSLGVAAFYKFAVAEPRKKAYADFYR. The Mitochondrial intermembrane portion of the chain corresponds to 55 to 75; that stretch reads NYDSMKDFEEMRKAGIFQSAK.

This sequence belongs to the cytochrome c oxidase subunit 6c family. In terms of assembly, component of the cytochrome c oxidase (complex IV, CIV), a multisubunit enzyme composed of 14 subunits. The complex is composed of a catalytic core of 3 subunits MT-CO1, MT-CO2 and MT-CO3, encoded in the mitochondrial DNA, and 11 supernumerary subunits COX4I, COX5A, COX5B, COX6A, COX6B, COX6C, COX7A, COX7B, COX7C, COX8 and NDUFA4, which are encoded in the nuclear genome. The complex exists as a monomer or a dimer and forms supercomplexes (SCs) in the inner mitochondrial membrane with NADH-ubiquinone oxidoreductase (complex I, CI) and ubiquinol-cytochrome c oxidoreductase (cytochrome b-c1 complex, complex III, CIII), resulting in different assemblies (supercomplex SCI(1)III(2)IV(1) and megacomplex MCI(2)III(2)IV(2)).

It localises to the mitochondrion inner membrane. The protein operates within energy metabolism; oxidative phosphorylation. Its function is as follows. Component of the cytochrome c oxidase, the last enzyme in the mitochondrial electron transport chain which drives oxidative phosphorylation. The respiratory chain contains 3 multisubunit complexes succinate dehydrogenase (complex II, CII), ubiquinol-cytochrome c oxidoreductase (cytochrome b-c1 complex, complex III, CIII) and cytochrome c oxidase (complex IV, CIV), that cooperate to transfer electrons derived from NADH and succinate to molecular oxygen, creating an electrochemical gradient over the inner membrane that drives transmembrane transport and the ATP synthase. Cytochrome c oxidase is the component of the respiratory chain that catalyzes the reduction of oxygen to water. Electrons originating from reduced cytochrome c in the intermembrane space (IMS) are transferred via the dinuclear copper A center (CU(A)) of subunit 2 and heme A of subunit 1 to the active site in subunit 1, a binuclear center (BNC) formed by heme A3 and copper B (CU(B)). The BNC reduces molecular oxygen to 2 water molecules using 4 electrons from cytochrome c in the IMS and 4 protons from the mitochondrial matrix. This chain is Cytochrome c oxidase subunit 6C (COX6C), found in Carlito syrichta (Philippine tarsier).